We begin with the raw amino-acid sequence, 378 residues long: Interleukin-3 receptor subunit alpha (378 aa).

Residues 1-18 form the signal peptide; the sequence is MVLLWLTLLLIALPCLLQ. The Extracellular segment spans residues 19–305; that stretch reads TKEDPNPPIT…EEGANTRAWR (287 aa). Asn46, Asn64, Asn80, and Asn109 each carry an N-linked (GlcNAc...) asparagine glycan. Cystine bridges form between Cys52–Cys68, Cys76–Cys195, Cys112–Cys122, and Cys151–Cys165. Asn212 and Asn218 each carry an N-linked (GlcNAc...) asparagine glycan. An intrachain disulfide couples Cys217 to Cys293. The short motif at 282–286 is the WSXWS motif element; the sequence is LSAWS. A helical transmembrane segment spans residues 306-325; sequence TSLLIALGTLLALVCVFVIC. Over 326-378 the chain is Cytoplasmic; sequence RRYLVMQRLFPRIPHMKDPIGDSFQNDKLVVWEAGKAGLEECLVTEVQVVQKT. Residues 334–342 carry the Box 1 motif motif; sequence LFPRIPHMK.

The protein belongs to the type I cytokine receptor family. Type 5 subfamily. In terms of assembly, interacts with IL3. Heterodimer of an alpha and a beta subunit. The beta subunit is common to the IL3, IL5 and GM-CSF receptors. In terms of processing, ubiquitinated by RNFT2 in response to IL3. Ubiquitination leads ligand-induced degradation by the proteasome. Ubiquitinated by RNF128 via 'Lys-27'-linked polyubiquitination, facilitating its degradation through the lysosomal pathway.

Its subcellular location is the cell membrane. In terms of biological role, cell surface receptor for IL3 expressed on hematopoietic progenitor cells, monocytes and B-lymphocytes that controls the production and differentiation of hematopoietic progenitor cells into lineage-restricted cells. Ligand stimulation rapidly induces hetrodimerization with IL3RB, phosphorylation and enzyme activity of effector proteins such as JAK2 and PI3K that play a role in signaling cell proliferation and differentiation. Activation of JAK2 leads to STAT5-mediated transcriptional program. The sequence is that of Interleukin-3 receptor subunit alpha from Homo sapiens (Human).